The chain runs to 590 residues: Regulatory solute carrier protein family 1 member 1 (590 aa).

4 disordered regions span residues 1–116 (MSSS…TQGL), 144–234 (EEGW…PDSE), 277–331 (SPSS…AEES), and 359–466 (EEVT…SHRT). Residues 16-35 (SSGQSPEAGNPTSLARSVSA) show a composition bias toward polar residues. A compositionally biased stretch (low complexity) spans 78-91 (SPCAAAAAPSSAMP). The span at 150-161 (ENQNPSQVNDLQ) shows a compositional bias: polar residues. Basic and acidic residues-rich tracts occupy residues 162–179 (QHQE…RDAP) and 188–203 (PGER…REAT). Residues 313–331 (SSSSVCGSSQPPAESAEES) are compositionally biased toward low complexity. Residues 362-376 (TCQSEGTAWGQTRVN) are compositionally biased toward polar residues. Composition is skewed to basic and acidic residues over residues 380–395 (RWTE…DRPQ) and 404–420 (VKTE…RIED). The span at 451–465 (SVTVTSAETSNQSHR) shows a compositional bias: polar residues. The UBA domain occupies 544–584 (GFPAADIDRILRAGFTLQEALGALHRVGGNADLALLVLLAK).

Interacts with YRDC. Highly expressed in renal outer medulla, renal inner medulla, duodenum, ileum and jejunum. Moderately expressed in renal outer cortex, renal papilla, brain and liver.

The protein resides in the cell membrane. Its subcellular location is the nucleus. It is found in the golgi apparatus. It localises to the trans-Golgi network. In terms of biological role, mediates transcriptional and post-transcriptional regulation of SLC5A1. Inhibits a dynamin and PKC-dependent exocytotic pathway of SLC5A1. Also involved in transcriptional regulation of SLC22A2. Exhibits glucose-dependent, short-term inhibition of SLC5A1 and SLC22A2 by inhibiting the release of vesicles from the trans-Golgi network. This is Regulatory solute carrier protein family 1 member 1 (RSC1A1) from Oryctolagus cuniculus (Rabbit).